A 223-amino-acid chain; its full sequence is uncharacterized protein (223 aa).

Residues 11 to 71 (EATFESFIDA…YLLEKRQMKK (61 aa)) form the HTH tetR-type domain. Residues 34–53 (SVEDISRAAGYSKGAFYVHF) constitute a DNA-binding region (H-T-H motif).

This is an uncharacterized protein from Bacillus subtilis (strain 168).